We begin with the raw amino-acid sequence, 707 residues long: Elongation factor G (707 aa).

The tr-type G domain occupies 8 to 297; it reads ERVRNIGIAA…AVLDYLPSPL (290 aa). GTP contacts are provided by residues 17-24, 96-100, and 150-153; these read AHIDAGKT, DTPGH, and NKMD.

The protein belongs to the TRAFAC class translation factor GTPase superfamily. Classic translation factor GTPase family. EF-G/EF-2 subfamily.

It localises to the cytoplasm. In terms of biological role, catalyzes the GTP-dependent ribosomal translocation step during translation elongation. During this step, the ribosome changes from the pre-translocational (PRE) to the post-translocational (POST) state as the newly formed A-site-bound peptidyl-tRNA and P-site-bound deacylated tRNA move to the P and E sites, respectively. Catalyzes the coordinated movement of the two tRNA molecules, the mRNA and conformational changes in the ribosome. In Gloeobacter violaceus (strain ATCC 29082 / PCC 7421), this protein is Elongation factor G.